The following is a 406-amino-acid chain: Putative ankyrin repeat protein RF_0266 (406 aa).

ANK repeat units follow at residues 68-98 (TSHS…DINN), 103-129 (NYIT…QDDI), 130-161 (KVQN…IIKP), 163-189 (HIEL…DIEK), and 203-232 (SIDC…KPEQ).

The protein is Putative ankyrin repeat protein RF_0266 of Rickettsia felis (strain ATCC VR-1525 / URRWXCal2) (Rickettsia azadi).